The sequence spans 660 residues: Acetyl-coenzyme A synthetase (660 aa).

CoA contacts are provided by residues 197–200 (RGGK) and Thr317. ATP contacts are provided by residues 397 to 399 (GEP), 421 to 426 (DTWWQT), Asp512, and Arg528. Residue Ser536 participates in CoA binding. Arg539 is an ATP binding site. Positions 550, 552, and 555 each coordinate Mg(2+). Lys625 is modified (N6-acetyllysine).

Belongs to the ATP-dependent AMP-binding enzyme family. It depends on Mg(2+) as a cofactor. Acetylated. Deacetylation by the SIR2-homolog deacetylase activates the enzyme.

It catalyses the reaction acetate + ATP + CoA = acetyl-CoA + AMP + diphosphate. Its function is as follows. Catalyzes the conversion of acetate into acetyl-CoA (AcCoA), an essential intermediate at the junction of anabolic and catabolic pathways. AcsA undergoes a two-step reaction. In the first half reaction, AcsA combines acetate with ATP to form acetyl-adenylate (AcAMP) intermediate. In the second half reaction, it can then transfer the acetyl group from AcAMP to the sulfhydryl group of CoA, forming the product AcCoA. This is Acetyl-coenzyme A synthetase from Burkholderia mallei (strain NCTC 10247).